The primary structure comprises 438 residues: Glucosamine kinase (438 aa).

ATP-binding positions include K133, 186-188, and D193; that span reads AYL. D300 provides a ligand contact to D-glucosamine. 3 residues coordinate Mg(2+): Q305, D317, and D319. Positions 405 to 420 match the Substrate specificity determinant motif motif; the sequence is QEVREYLYAVRHLPHW. E409 serves as a coordination point for D-glucosamine.

Belongs to the actinobacterial glucosamine kinase family. Monomer. It depends on Mg(2+) as a cofactor.

It carries out the reaction D-glucosamine + ATP = D-glucosamine 6-phosphate + ADP + H(+). In terms of biological role, catalyzes the ATP-dependent phosphorylation of D-glucosamine (GlcN) to D-glucosamine 6-phosphate. May be involved in the phosphorylation of acquired extracellular GlcN derived from the hydrolysis of chitosan, i.e., in the incorporation of exogenous GlcN into the bacterial GlcNAc metabolism. To a lesser extent, is also active on glucose, but is unable to phosphorylate maltose, 18 other sugars and several aminoglycoside antibiotics. This chain is Glucosamine kinase, found in Streptacidiphilus jiangxiensis.